We begin with the raw amino-acid sequence, 330 residues long: tRNA-modifying protein YgfZ (330 aa).

The folate site is built by W28 and W190.

Belongs to the tRNA-modifying YgfZ family.

Its subcellular location is the cytoplasm. Functionally, folate-binding protein involved in regulating the level of ATP-DnaA and in the modification of some tRNAs. It is probably a key factor in regulatory networks that act via tRNA modification, such as initiation of chromosomal replication. In Yersinia pseudotuberculosis serotype O:1b (strain IP 31758), this protein is tRNA-modifying protein YgfZ.